The sequence spans 463 residues: L-seryl-tRNA(Sec) selenium transferase (463 aa).

K295 is modified (N6-(pyridoxal phosphate)lysine).

This sequence belongs to the SelA family. As to quaternary structure, homodecamer; pentamer of dimers. Binds only one seryl-tRNA(Sec) per dimer. The cofactor is pyridoxal 5'-phosphate.

It localises to the cytoplasm. It catalyses the reaction L-seryl-tRNA(Sec) + selenophosphate + H(+) = L-selenocysteinyl-tRNA(Sec) + phosphate. Its pathway is aminoacyl-tRNA biosynthesis; selenocysteinyl-tRNA(Sec) biosynthesis; selenocysteinyl-tRNA(Sec) from L-seryl-tRNA(Sec) (bacterial route): step 1/1. Converts seryl-tRNA(Sec) to selenocysteinyl-tRNA(Sec) required for selenoprotein biosynthesis. The sequence is that of L-seryl-tRNA(Sec) selenium transferase from Shigella boydii serotype 18 (strain CDC 3083-94 / BS512).